A 403-amino-acid polypeptide reads, in one-letter code: Endophilin-B2 (403 aa).

The interval 1 to 27 (MDFNVKKLASDAGVFFSRAMQFTEEKL) is membrane-binding amphipathic helix. The region spanning 24–287 (EEKLGQAEKT…LGRFSGTFVG (264 aa)) is the BAR domain. Residues 210-233 (WSDEVEKAEHELRLTQTEFDRQAE) adopt a coiled-coil conformation. The 61-residue stretch at 343-403 (SGTRKARVLY…VPVTYLELLS (61 aa)) folds into the SH3 domain.

The protein belongs to the endophilin family. Homodimer, and heterodimer with SH3GLB1.

Its subcellular location is the cytoplasm. The polypeptide is Endophilin-B2 (Gallus gallus (Chicken)).